The chain runs to 550 residues: Hydroxylamine reductase (550 aa).

[2Fe-2S] cluster-binding residues include Cys3, Cys6, Cys18, and Cys25. Residues His249, Glu273, Cys317, Cys405, Cys433, Cys458, Glu492, and Lys494 each contribute to the hybrid [4Fe-2O-2S] cluster site. At Cys405 the chain carries Cysteine persulfide.

It belongs to the HCP family. The cofactor is [2Fe-2S] cluster. Hybrid [4Fe-2O-2S] cluster serves as cofactor.

Its subcellular location is the cytoplasm. The enzyme catalyses A + NH4(+) + H2O = hydroxylamine + AH2 + H(+). Functionally, catalyzes the reduction of hydroxylamine to form NH(3) and H(2)O. The sequence is that of Hydroxylamine reductase from Escherichia coli O7:K1 (strain IAI39 / ExPEC).